The primary structure comprises 214 residues: Endothelin-3 (214 aa).

A signal peptide spans 1-16 (MEPGLWLLLGLTVTSA). Residues 17–94 (AGLVPCPQSG…DKGLPAHHRP (78 aa)) constitute a propeptide that is removed on maturation. A disordered region spans residues 24–91 (QSGDSGRASV…KQEDKGLPAH (68 aa)). Over residues 25–35 (SGDSGRASVSQ) the composition is skewed to polar residues. Disulfide bonds link cysteine 97–cysteine 111 and cysteine 99–cysteine 107. Positions 118–214 (INTPEQTVPY…MSRTDKAHRP (97 aa)) are excised as a propeptide. An endothelin-like region spans residues 159–173 (CTCMGADDKACAHFC). The interval 183-214 (SGRAERPAAEEMRETGGPRQRLMSRTDKAHRP) is disordered. Basic and acidic residues predominate over residues 185-198 (RAERPAAEEMRETG).

This sequence belongs to the endothelin/sarafotoxin family.

Its subcellular location is the secreted. Endothelins are endothelium-derived vasoconstrictor peptides. The chain is Endothelin-3 (Edn3) from Mus musculus (Mouse).